The chain runs to 418 residues: Secreted aspartic protease 5 (418 aa).

The signal sequence occupies residues 1–18 (MFLKNILSVLAFALLIDA). Positions 19–76 (APVKRSPGFVTLDFNVKRSLVDPDDPTVEAKRSPLFLEFTPSEFPVDETGRDGDVDKR) are cleaved as a propeptide — activation peptide. The Peptidase A1 domain maps to 90 to 404 (YTADITVGSD…NLDDKKISMA (315 aa)). D108 is an active-site residue. 108–110 (DTG) is a pepstatin A binding site. An intrachain disulfide couples C123 to C135. 161–162 (GD) is a pepstatin A binding site. Zn(2+) is bound at residue E268. Residue D294 is part of the active site. Pepstatin A is bound at residue 294-298 (DSGTT). C332 and C370 form a disulfide bridge.

The protein belongs to the peptidase A1 family.

It localises to the secreted. It catalyses the reaction Preferential cleavage at the carboxyl of hydrophobic amino acids, but fails to cleave 15-Leu-|-Tyr-16, 16-Tyr-|-Leu-17 and 24-Phe-|-Phe-25 of insulin B chain. Activates trypsinogen, and degrades keratin.. Inhibited by pepstatin A analogs. Secreted aspartic peptidases (SAPs) are a group of ten acidic hydrolases considered as key virulence factors. These enzymes supply the fungus with nutrient amino acids as well as are able to degrade the selected host's proteins involved in the immune defense. Moreover, acts toward human hemoglobin though limited proteolysis to generate a variety of antimicrobial hemocidins, enabling to compete with the other microorganisms of the same physiological niche using the microbicidal peptides generated from the host protein. This is Secreted aspartic protease 5 from Candida albicans (strain SC5314 / ATCC MYA-2876) (Yeast).